Consider the following 151-residue polypeptide: SsrA-binding protein (151 aa).

Belongs to the SmpB family.

Its subcellular location is the cytoplasm. Required for rescue of stalled ribosomes mediated by trans-translation. Binds to transfer-messenger RNA (tmRNA), required for stable association of tmRNA with ribosomes. tmRNA and SmpB together mimic tRNA shape, replacing the anticodon stem-loop with SmpB. tmRNA is encoded by the ssrA gene; the 2 termini fold to resemble tRNA(Ala) and it encodes a 'tag peptide', a short internal open reading frame. During trans-translation Ala-aminoacylated tmRNA acts like a tRNA, entering the A-site of stalled ribosomes, displacing the stalled mRNA. The ribosome then switches to translate the ORF on the tmRNA; the nascent peptide is terminated with the 'tag peptide' encoded by the tmRNA and targeted for degradation. The ribosome is freed to recommence translation, which seems to be the essential function of trans-translation. The protein is SsrA-binding protein of Geotalea uraniireducens (strain Rf4) (Geobacter uraniireducens).